We begin with the raw amino-acid sequence, 419 residues long: Sulfate adenylyltransferase (419 aa).

This sequence belongs to the sulfate adenylyltransferase family.

The enzyme catalyses sulfate + ATP + H(+) = adenosine 5'-phosphosulfate + diphosphate. It participates in sulfur metabolism; hydrogen sulfide biosynthesis; sulfite from sulfate: step 1/3. The sequence is that of Sulfate adenylyltransferase from Psychrobacter sp. (strain PRwf-1).